Here is a 94-residue protein sequence, read N- to C-terminus: Sapecin (94 aa).

An N-terminal signal peptide occupies residues 1 to 23 (MKSFIVLAVTLCLAAFFMGQSVA). A propeptide spanning residues 24–54 (SPAAAAEESKFVDGLHALKTIEPELHGRYKR) is cleaved from the precursor. 3 disulfide bridges follow: Cys-57–Cys-84, Cys-70–Cys-90, and Cys-74–Cys-92.

Belongs to the invertebrate defensin family. Type 1 subfamily. In terms of tissue distribution, hemocytes and fat body.

It localises to the secreted. Functionally, sapecins, which are potent bactericidal proteins, are produced in response to injury. Sapecin is cytotoxic to Gram-positive bacteria, and to a lesser extent against Gram-negative bacteria. The sequence is that of Sapecin from Sarcophaga peregrina (Flesh fly).